Here is a 503-residue protein sequence, read N- to C-terminus: Cytochrome P450 monooxygenase roqO (503 aa).

Residues 11–31 (YSGTACAISLFIFGITLLFPF) form a helical membrane-spanning segment. A glycan (N-linked (GlcNAc...) asparagine) is linked at N205. C444 is a binding site for heme.

The protein belongs to the cytochrome P450 family. The cofactor is heme.

Its subcellular location is the membrane. Its pathway is alkaloid biosynthesis. Functionally, cytochrome P450 monooxygenase; part of the gene cluster that mediates the biosynthesis of the mycotoxin meleagrin. The first stage is catalyzed by the dipeptide synthase roqA which condenses histidine and tryptophan to produce histidyltryptophanyldiketopiperazine (HTD). HTD is then converted to roquefortine C through two possible pathways. In the first pathway, prenyltransferase roqD transforms HTD to the intermediate roquefortine D, which is in turn converted to roquefortine C by the cytochrome P450 monooxygenase roqR. In the second pathway, HTD is first converted to the intermediate dehydrohistidyltryptophanyldi-ketopiperazine (DHTD) by roqR which is then prenylated by roqD to form roquefortine C. Roquefortine C can be further transformed to meleagrin via three more reactions including oxydation to glandicolin A by roqM, which is further reduced to glandicoline B by roqO. Finally, glandicoline B is converted to meleagrin by the glandicoline B O-methyltransferase roqN. More studies identified further branching and additional metabolites produced by the roquefortine/meleagrin cluster, including roquefortine F, roquefortine L, roquefortine M, roquefortine N and neoxaline. The chain is Cytochrome P450 monooxygenase roqO from Penicillium rubens (strain ATCC 28089 / DSM 1075 / NRRL 1951 / Wisconsin 54-1255) (Penicillium chrysogenum).